The sequence spans 329 residues: Isopenicillin N synthase (329 aa).

Residues arginine 87, tyrosine 91, and tyrosine 189 each contribute to the isopenicillin N site. Arginine 87, tyrosine 91, tyrosine 189, histidine 212, and aspartate 214 together coordinate N-[(5S)-5-amino-5-carboxypentanoyl]-L-cysteinyl-D-valine. A Fe2OG dioxygenase domain is found at 180–286 (TLSAVTLIHY…RLSLPFFLHA (107 aa)). Fe(2+) is bound by residues histidine 212, aspartate 214, and histidine 268. Arginine 277 is a 2-oxoglutarate binding site. Serine 279 contacts isopenicillin N. Serine 279 contributes to the N-[(5S)-5-amino-5-carboxypentanoyl]-L-cysteinyl-D-valine binding site.

It belongs to the iron/ascorbate-dependent oxidoreductase family. The cofactor is Fe cation. It depends on L-ascorbate as a cofactor.

It catalyses the reaction N-[(5S)-5-amino-5-carboxypentanoyl]-L-cysteinyl-D-valine + O2 = isopenicillin N + 2 H2O. It functions in the pathway antibiotic biosynthesis; penicillin G biosynthesis; penicillin G from L-alpha-aminoadipate and L-cysteine and L-valine: step 2/3. Removes, in the presence of oxygen, 4 hydrogen atoms from delta-L-(alpha-aminoadipyl)-L-cysteinyl-D-valine (ACV) to form the azetidinone and thiazolidine rings of isopenicillin. The chain is Isopenicillin N synthase (pcbC) from Streptomyces griseus.